A 588-amino-acid polypeptide reads, in one-letter code: MNNSINHKFHHISRAEYQELLAVSRGDAVADYIIDNVSILDLINGGEISGPIVIKGRYIAGVGAEYTDAPALQRIDAHGATAVPGFIDAHLHIESSMMTPVTFETATLPRGLTTVICDPHEIVNVMGEAGFAWFARCAEQARQNQYLQVSSCVPALEGCDVNGASFTLEQMLAWRDHPQVTGLAEMMDYPGVISGQNALLDKLDAFRHLTLDGHCPGLGGKELNAYIAAGIENCHESYQLEEGRRKLQLGMSLMIREGSAARNLNALAPLINEFNSPQCMLCTDDRNPWEIAHEGHIDALIRRLIEQHNVPLHVAYRVASWSTARHFGLNHLGLLAPGKQADIVLLSDARKVTVQQVLVKGEPIDAQTLQAEESAKLAQSAPPYGNTIARQPVSASDFALQFTPGKRYRVIDVIHNELITHSHSSVYSENGFERNDVCFIAVLERYGQRLAPACGLLGGFGLNEGALAATVSHDSHNIVVIGRSAEEMALAVNQVIQDGGGLCVVRNGQVQSHLPLPIAGLMSTDTAQSLAEQIDALKAAARECGPLPDEPFIQMAFLSLPVIPALKLTSQGLFDGEKFAFTTLEVTE.

This sequence belongs to the metallo-dependent hydrolases superfamily. Adenine deaminase family. In terms of assembly, homodimer. Requires Mn(2+) as cofactor.

It catalyses the reaction adenine + H2O + H(+) = hypoxanthine + NH4(+). This is Adenine deaminase from Escherichia coli O157:H7 (strain EC4115 / EHEC).